Reading from the N-terminus, the 413-residue chain is NAD(P)H oxidoreductase RTN4IP1, mitochondrial (413 aa).

The transit peptide at 1–23 directs the protein to the mitochondrion; sequence MTAAGFNSILCLRQLVRLNRRQY. The segment at 27–52 is disordered; it reads AKSVLSGSQTNDQATPPPTSKSADKM. Polar residues predominate over residues 31-40; that stretch reads LSGSQTNDQA. Residues 61–405 enclose the Enoyl reductase (ER) domain; sequence GDIDELQLSE…SGHLRGKIVV (345 aa). NADPH is bound by residues Ser-228, Gly-230, Val-231, Ser-251, Tyr-269, Gly-353, Phe-355, His-398, and Arg-400.

The protein belongs to the zinc-containing alcohol dehydrogenase family. Quinone oxidoreductase subfamily.

It localises to the mitochondrion matrix. The enzyme catalyses a quinone + NADH + H(+) = a quinol + NAD(+). The catalysed reaction is a quinone + NADPH + H(+) = a quinol + NADP(+). Its pathway is cofactor biosynthesis; ubiquinone biosynthesis. In terms of biological role, NAD(P)H oxidoreductase. Involved in the ubiquinone biosynthetic pathway. The polypeptide is NAD(P)H oxidoreductase RTN4IP1, mitochondrial (Drosophila melanogaster (Fruit fly)).